The primary structure comprises 295 residues: UDP-N-acetylenolpyruvoylglucosamine reductase (295 aa).

The region spanning 23-188 is the FAD-binding PCMH-type domain; that stretch reads KVGGPADFLA…ISAKFALKPG (166 aa). Residue arginine 167 is part of the active site. Residue serine 217 is the Proton donor of the active site. Glutamate 287 is an active-site residue.

It belongs to the MurB family. FAD serves as cofactor.

It localises to the cytoplasm. The catalysed reaction is UDP-N-acetyl-alpha-D-muramate + NADP(+) = UDP-N-acetyl-3-O-(1-carboxyvinyl)-alpha-D-glucosamine + NADPH + H(+). It functions in the pathway cell wall biogenesis; peptidoglycan biosynthesis. Its function is as follows. Cell wall formation. The polypeptide is UDP-N-acetylenolpyruvoylglucosamine reductase (Streptococcus pyogenes serotype M6 (strain ATCC BAA-946 / MGAS10394)).